Reading from the N-terminus, the 285-residue chain is ATP synthase gamma chain (285 aa).

The protein belongs to the ATPase gamma chain family. As to quaternary structure, F-type ATPases have 2 components, CF(1) - the catalytic core - and CF(0) - the membrane proton channel. CF(1) has five subunits: alpha(3), beta(3), gamma(1), delta(1), epsilon(1). CF(0) has three main subunits: a, b and c.

Its subcellular location is the cell membrane. In terms of biological role, produces ATP from ADP in the presence of a proton gradient across the membrane. The gamma chain is believed to be important in regulating ATPase activity and the flow of protons through the CF(0) complex. This Geobacillus kaustophilus (strain HTA426) protein is ATP synthase gamma chain.